A 146-amino-acid polypeptide reads, in one-letter code: 3-hydroxyacyl-[acyl-carrier-protein] dehydratase FabZ (146 aa).

Residue His47 is part of the active site.

It belongs to the thioester dehydratase family. FabZ subfamily.

It localises to the cytoplasm. It catalyses the reaction a (3R)-hydroxyacyl-[ACP] = a (2E)-enoyl-[ACP] + H2O. In terms of biological role, involved in unsaturated fatty acids biosynthesis. Catalyzes the dehydration of short chain beta-hydroxyacyl-ACPs and long chain saturated and unsaturated beta-hydroxyacyl-ACPs. In Nitrosospira multiformis (strain ATCC 25196 / NCIMB 11849 / C 71), this protein is 3-hydroxyacyl-[acyl-carrier-protein] dehydratase FabZ.